We begin with the raw amino-acid sequence, 258 residues long: MPRGGSEDQKVYVGNLPGDVREKEVEDIFHKYGRIKYVDIKSGRGPAFAFVEFEDHRDAEDAVRARDGYEFDGRRIRVEFTRGVGPRGPGGRPLQDGGDHRGGDFRGGRGGGRGGGPQRRTGYRVIVEGLPPTGSWQDLKDHMRDAGDVCYADVARDGTGVVEFTRYEDVKYAVRKLDDTKFRSHEGETAYIRVREDNSSGGGSGGGGRDRSRSRSPRAERRASPKYSPRRSRSRSRSRSRSRSRSASRSPSRSPSPQ.

Residues 9 to 83 (QKVYVGNLPG…RRIRVEFTRG (75 aa)) form the RRM 1 domain. Disordered stretches follow at residues 81–120 (TRGV…PQRR) and 190–258 (AYIR…PSPQ). Over residues 97–107 (GGDHRGGDFRG) the composition is skewed to basic and acidic residues. Gly residues predominate over residues 108–117 (GRGGGRGGGP). The 75-residue stretch at 123–197 (YRVIVEGLPP…ETAYIRVRED (75 aa)) folds into the RRM 2 domain. Over residues 208 to 223 (GRDRSRSRSPRAERRA) the composition is skewed to basic and acidic residues. Basic residues predominate over residues 228–246 (SPRRSRSRSRSRSRSRSRS). A compositionally biased stretch (low complexity) spans 247–258 (ASRSPSRSPSPQ).

It belongs to the splicing factor SR family. Interacts with spk-1. Directly phosphorylated by spk-1 in vitro on serine residues of the RS domain. Predominantly coexpressed with spk-1 in adult hermaphrodite germlines.

It is found in the nucleus. Plays an essential role in embryogenesis. In Caenorhabditis elegans, this protein is Probable splicing factor, arginine/serine-rich 3 (rsp-3).